A 456-amino-acid chain; its full sequence is Short chain dehydrogenase tazN (456 aa).

NADP(+)-binding residues include Val-45, Asp-99, Asn-126, Arg-160, Tyr-195, Lys-199, and Thr-229. Tyr-195 serves as the catalytic Proton donor. Catalysis depends on Lys-199, which acts as the Lowers pKa of active site Tyr.

It belongs to the short-chain dehydrogenases/reductases (SDR) family.

It participates in secondary metabolite biosynthesis. Short chain dehydrogenase; part of the gene cluster that mediates the biosynthesis of azaterrilone A and other azaphilones, a class of fungal metabolites characterized by a highly oxygenated pyrano-quinone bicyclic core and exhibiting a broad range of bioactivities. The first step of the pathway begins with the non-reducing polyketide synthase tazA that assembles one acetyl-CoA starter unit, five malonyl-CoA units, and catalyzes a series of Claisen condensations, methylation, PT-mediated cyclization, and finally releases the first hexaketide precursor through the R-domain. The tazA product then undergoes reduction on its terminal ketone and the following pyran-ring formation by yet undetermined enzyme(s). Dehydration and enoyl reduction, possibly involving the trans-enoyl reductase tazE leads to the next intermediate. TazD is predicted as an acetyltransferase and might catalyze the acetylation steps leading to the synthesis of azaterrilone A. Azaterrilone A is not the final product of the taz pathway and both the highly reducing polyketide synthase tazB and the dual enzyme tazHJ catalyze late steps of the pathway, leading to the production of the 2 final stereoisomers that contain additional polyketide modification whose structures have still to be determined. This is Short chain dehydrogenase tazN from Aspergillus terreus (strain NIH 2624 / FGSC A1156).